Consider the following 142-residue polypeptide: Small ribosomal subunit protein bS6 (142 aa).

Over residues 110-133 (NKKPSHAKEKHEKTEHTHSHHTEE) the composition is skewed to basic and acidic residues. The disordered stretch occupies residues 110-142 (NKKPSHAKEKHEKTEHTHSHHTEETESVGSHSK).

The protein belongs to the bacterial ribosomal protein bS6 family.

In terms of biological role, binds together with bS18 to 16S ribosomal RNA. This is Small ribosomal subunit protein bS6 from Helicobacter pylori (strain Shi470).